Consider the following 402-residue polypeptide: Renin (402 aa).

Residues Met1–Thr26 form the signal peptide. The propeptide at Ala27–Lys64 is activation peptide. A glycan (N-linked (GlcNAc...) asparagine) is linked at Asn69. A Peptidase A1 domain is found at Tyr84–Ala399. Asp102 is an active-site residue. An intrachain disulfide couples Cys115 to Cys122. The N-linked (GlcNAc...) asparagine glycan is linked to Asn139. Cysteines 278 and 282 form a disulfide. Asp287 is an active-site residue. Asn320 is a glycosylation site (N-linked (GlcNAc...) asparagine). Cys321 and Cys358 are oxidised to a cystine.

The protein belongs to the peptidase A1 family. Interacts with ATP6AP2.

It localises to the secreted. The protein resides in the membrane. The catalysed reaction is Cleavage of Leu-|-Xaa bond in angiotensinogen to generate angiotensin I.. Its activity is regulated as follows. Interaction with ATP6AP2 results in a 5-fold increased efficiency in angiotensinogen processing. In terms of biological role, renin is a highly specific endopeptidase, whose only known function is to generate angiotensin I from angiotensinogen in the plasma, initiating a cascade of reactions that produce an elevation of blood pressure and increased sodium retention by the kidney. This chain is Renin (Ren1), found in Rattus norvegicus (Rat).